The chain runs to 368 residues: tRNA-specific 2-thiouridylase MnmA (368 aa).

ATP is bound by residues 24–31 (AMSGGVDS) and leucine 50. Residue cysteine 117 is the Nucleophile of the active site. Cysteine 117 and cysteine 213 form a disulfide bridge. Glycine 141 contacts ATP. The interaction with tRNA stretch occupies residues 163–165 (KDQ). The active-site Cysteine persulfide intermediate is the cysteine 213.

Belongs to the MnmA/TRMU family.

The protein resides in the cytoplasm. It carries out the reaction S-sulfanyl-L-cysteinyl-[protein] + uridine(34) in tRNA + AH2 + ATP = 2-thiouridine(34) in tRNA + L-cysteinyl-[protein] + A + AMP + diphosphate + H(+). In terms of biological role, catalyzes the 2-thiolation of uridine at the wobble position (U34) of tRNA, leading to the formation of s(2)U34. This Wolbachia pipientis subsp. Culex pipiens (strain wPip) protein is tRNA-specific 2-thiouridylase MnmA.